Reading from the N-terminus, the 28-residue chain is Small integral membrane protein 47 (28 aa).

Residues 7-24 (VTLAMALFTILTSIYFFN) form a helical membrane-spanning segment.

The protein localises to the membrane. The sequence is that of Small integral membrane protein 47 from Homo sapiens (Human).